The chain runs to 724 residues: MALAMQSSEFQFAQRLASSEKGVRDRAVRKLRQYLSARTQSDTGSFSQEELLKIWKGLFYCMWVQDEPLLQEELANIISQLIHVVNSLEAQYLFIQTFWQTMNREWQGIDKLQLDKYYMLIRLVLRQSFEVLKRNAWEESQITLFLDILMKEILSPESQSPNGVRTHLIDVYLEELTTVGGAELLADQNLKLIDPFCRIAAKTKDHTLVQTVARGVFEVIVDQSACVPQESVEERKTKEDGSGFPTKALACRKAVSGKKAALDECLRDGVIGSRERDICAALKDSGSPLQFDYKAVADRLLEIANSKSTPPFNRKRLCRLVRKFQDLCEGNGAPLSSAEDNGQRRHKRKRKKLLESEKGDTVSPAAEEDSGGHIHKKKRKKRKRSHFQPDTQNLDAVAVPKVPDSESEPDTAQRQAPCGQACVTEPTAEAVSSIGENSSKPTPVMPIHNKRKRPRKKKLRAHKEICKSTTLPQEDMSKNDAVSGHSQSSAAHISSSEGVQAQKRKRKLGALPDSSSDLPVQKSGTPTSPVEGKDGQTTLPRCKRSQKKTASSTLDPCDPSSQKPAISKKKKKTMKLMSNGVLESNPGQIQALGSNRTLKKPLKTEDDFVKFDTRFLPKPLFFRKAKNSSATRPQGPAGQLNKTPSSSKKVTFGLNRNMTAEFKKTDKSILVSPTGLSRVAFNPEQRPLHGVLKTATSSPASTPLSPMRLPATTPKRRPRAADFF.

The interval 331-576 (NGAPLSSAED…SKKKKKTMKL (246 aa)) is disordered. Phosphoserine occurs at positions 336 and 370. Residues 373–386 (HIHKKKRKKRKRSH) are compositionally biased toward basic residues. Phosphoserine occurs at positions 432 and 438. Over residues 448–461 (HNKRKRPRKKKLRA) the composition is skewed to basic residues. A compositionally biased stretch (low complexity) spans 483–496 (SGHSQSSAAHISSS). Position 494 is a phosphoserine (Ser494). Polar residues-rich tracts occupy residues 513 to 528 (DSSS…TPTS) and 548 to 564 (KTAS…SQKP). The residue at position 618 (Lys618) is an N6-acetyllysine. The disordered stretch occupies residues 625–649 (AKNSSATRPQGPAGQLNKTPSSSKK). Over residues 640 to 649 (LNKTPSSSKK) the composition is skewed to polar residues. Residues Ser668 and Ser672 each carry the phosphoserine modification. A Citrulline modification is found at Arg678. Residues 687–724 (PLHGVLKTATSSPASTPLSPMRLPATTPKRRPRAADFF) are disordered. A Phosphothreonine modification is found at Thr694. Residues 694–706 (TATSSPASTPLSP) show a composition bias toward low complexity. Residues Ser698 and Ser701 each carry the phosphoserine modification.

The protein belongs to the RRP1 family. In terms of assembly, interacts with the transcriptional activator E2F1. Interacts with serine/threonine-protein phosphatase PP1 subunits PPP1CB and PPP1CC but not with PPP1CA. Interacts with 60S ribosomal proteins RPL5 and RPL27, ribosomal processing protein RRP1/NNP1 and other nucleolar proteins including NOP2/NOL1 and FBL. Also interacts with nucleolar protein NPM1/B23. Interacts with splicing factor SRSF1 and LUC7L3/CROP. Interacts with GTPase activator SIPA1. Interacts with H1-10, NCL, PARP1, TRIM28 and YBX3. Post-translationally, citrullinated by PADI4.

The protein resides in the nucleus. It localises to the nucleolus. It is found in the nucleoplasm. The protein localises to the chromosome. Its function is as follows. Positively regulates DNA damage-induced apoptosis by acting as a transcriptional coactivator of proapoptotic target genes of the transcriptional activator E2F1. Likely to play a role in ribosome biogenesis by targeting serine/threonine protein phosphatase PP1 to the nucleolus. Involved in regulation of mRNA splicing. Inhibits SIPA1 GTPase activity. Involved in regulating expression of extracellular matrix genes. Associates with chromatin and may play a role in modulating chromatin structure. The protein is Ribosomal RNA processing protein 1 homolog B (Rrp1b) of Mus musculus (Mouse).